The chain runs to 522 residues: Stellatic acid synthase (522 aa).

The chain crosses the membrane as a helical span at residues 23–43 (IYGIYEPLLALFAVYSVAVVV). Asn267 and Asn451 each carry an N-linked (GlcNAc...) asparagine glycan. Cys464 provides a ligand contact to heme. Asn495 is a glycosylation site (N-linked (GlcNAc...) asparagine).

This sequence belongs to the cytochrome P450 family. Requires heme as cofactor.

The protein localises to the membrane. It catalyses the reaction stellata-2,6,19-triene + 3 reduced [NADPH--hemoprotein reductase] + 3 O2 = stellatate + 3 oxidized [NADPH--hemoprotein reductase] + 4 H2O + 4 H(+). The protein operates within secondary metabolite biosynthesis; terpenoid biosynthesis. Cytochrome P450 monooxygenase; part of the gene cluster that mediates the biosynthesis of the sesterterpene stellatic acid. The first step in the pathway is performed by the stellatatriene synthase that possesses both prenyl transferase and terpene cyclase activity, converting isopentenyl diphosphate and dimethylallyl diphosphate into geranylgeranyl diphosphate (GGDP) and then converting GGDP into stellata-2,6,19-triene. The cytochrome P450 monooxygenase Stl-P450 then catalyzes three successive oxidation reactions on the C-20 methyl group to generate the carboxylic acid of stellatic acid. The chain is Stellatic acid synthase from Emericella variicolor (Aspergillus stellatus).